The primary structure comprises 236 residues: Protein-L-isoaspartate O-methyltransferase 1 (236 aa).

The active site involves serine 86.

This sequence belongs to the methyltransferase superfamily. L-isoaspartyl/D-aspartyl protein methyltransferase family.

The protein resides in the cytoplasm. The enzyme catalyses [protein]-L-isoaspartate + S-adenosyl-L-methionine = [protein]-L-isoaspartate alpha-methyl ester + S-adenosyl-L-homocysteine. Functionally, catalyzes the methyl esterification of L-isoaspartyl residues in peptides and proteins that result from spontaneous decomposition of normal L-aspartyl and L-asparaginyl residues. It plays a role in the repair and/or degradation of damaged proteins. The protein is Protein-L-isoaspartate O-methyltransferase 1 of Nitrosospira multiformis (strain ATCC 25196 / NCIMB 11849 / C 71).